The following is a 1288-amino-acid chain: Peroxidasin homolog (1288 aa).

An N-terminal signal peptide occupies residues 1–16 (MNLLLYLLLLVPWVLG). In terms of domain architecture, LRRNT spans 17–51 (SEDGCPAKCTCDKKGFTVDCSNAGLTRIPKGISSN). 7 LRR repeats span residues 27-49 (CDKK…KGIS), 50-72 (SNVR…DLEG), 73-96 (FPLL…ILDH), 97-120 (LPEL…ASES), 122-143 (PLAS…WLLQ), 145-168 (FPEL…LFEN), and 204-227 (AYCT…LLKC). Residues 180-228 (NPWNCDCRVTKVKALLRKVEWERKAYCTNPVELRHQAIDEVEESLLKCA) enclose the LRRCT domain. Asparagine 247 is a glycosylation site (N-linked (GlcNAc...) asparagine). Residues 304–323 (LRQSHHSNGAPQFTYKPRDN) are disordered. 2 consecutive Ig-like C2-type domains span residues 314-400 (PQFT…FSLD) and 407-494 (PNIY…AKLT). The cysteines at positions 335 and 384 are disulfide-linked. LRR repeat units follow at residues 356–381 (SSRK…DSGR) and 387–412 (VNSL…IYEG). An intrachain disulfide couples cysteine 428 to cysteine 478. N-linked (GlcNAc...) asparagine glycosylation occurs at asparagine 594. An intrachain disulfide couples cysteine 624 to cysteine 640. Aspartate 718 provides a ligand contact to heme b. Catalysis depends on histidine 719, which acts as the Proton acceptor. Aspartate 720 provides a ligand contact to Ca(2+). 2 cysteine pairs are disulfide-bonded: cysteine 739-cysteine 749 and cysteine 743-cysteine 770. Asparagine 740 is a glycosylation site (N-linked (GlcNAc...) asparagine). Ca(2+) contacts are provided by threonine 802, phenylalanine 804, aspartate 806, and serine 808. N-linked (GlcNAc...) asparagine glycosylation is present at asparagine 857. 2 residues coordinate heme b: glutamate 876 and histidine 972. LRR repeat units follow at residues 998–1022 (KAFF…LFAS) and 1049–1073 (SLDL…EYRQ). 2 disulfides stabilise this stretch: cysteine 1075/cysteine 1132 and cysteine 1173/cysteine 1200. Residues 1168-1189 (LARLLCDNGDEIDRIQKDVFMY) form an LRR 12 repeat.

Belongs to the peroxidase family. XPO subfamily. Requires Ca(2+) as cofactor. Heme b serves as cofactor.

The protein localises to the secreted. It localises to the extracellular space. The protein resides in the extracellular matrix. The enzyme catalyses L-lysyl-[collagen] + L-methionyl-[collagen] + H2O2 = [collagen]-L-lysyl-N-S-L-methionyl-[collagen] + 2 H2O + H(+). It catalyses the reaction bromide + H2O2 = hypobromite + H2O. The catalysed reaction is L-lysyl-[collagen] + L-methionyl-[collagen] + hypobromite = [collagen]-L-lysyl-N-S-L-methionyl-[collagen] + bromide + H2O + H(+). It carries out the reaction L-tyrosyl-[protein] + bromide + H2O2 + H(+) = 3-bromo-L-tyrosyl-[protein] + 2 H2O. The enzyme catalyses hypobromite + L-tyrosyl-[protein] + H(+) = 3-bromo-L-tyrosyl-[protein] + H2O. In terms of biological role, catalyzes the two-electron oxidation of bromide by hydrogen peroxide and generates hypobromite as a reactive intermediate which mediates the formation of sulfilimine cross-links between methionine and hydroxylysine residues within an uncross-linked collagen IV NC1 hexamer. Plays a role in the attachment of tissues and in axonal guidance during early developmental stages. May functionally antagonize the peroxidasin pxn-2 to maintain neuronal development. The chain is Peroxidasin homolog from Caenorhabditis briggsae.